The primary structure comprises 335 residues: UPF0353 protein Mvan_2751 (335 aa).

2 helical membrane-spanning segments follow: residues 18-38 (WFFLFFLVVLGLVALYVIVQM) and 67-87 (LPAVLLILSLMSFTVAMAGPT). Positions 98–294 (VVMLVIDVSQ…EQLKQVFTNL (197 aa)) constitute a VWFA domain. Residues 309-329 (VGWLRIGSLVLALAALGALLI) form a helical membrane-spanning segment.

It belongs to the UPF0353 family.

It localises to the cell membrane. The chain is UPF0353 protein Mvan_2751 from Mycolicibacterium vanbaalenii (strain DSM 7251 / JCM 13017 / BCRC 16820 / KCTC 9966 / NRRL B-24157 / PYR-1) (Mycobacterium vanbaalenii).